Reading from the N-terminus, the 1002-residue chain is Solute carrier family 12 member 3 (1002 aa).

Topologically, residues Met-1–Gly-135 are cytoplasmic. A Phosphoserine modification is found at Ser-41. Phosphothreonine is present on Thr-44. Ser-47 carries the phosphoserine modification. Residues Thr-48, Thr-53, and Thr-58 each carry the phosphothreonine modification. 2 positions are modified to phosphoserine: Ser-71 and Ser-89. Thr-122 bears the Phosphothreonine mark. Residue Ser-124 is modified to Phosphoserine. The discontinuously helical transmembrane segment at Trp-136–Gly-165 threads the bilayer. Residues Leu-146 and Trp-149 each contribute to the Na(+) site. A helical membrane pass occupies residues Ile-166–Ile-187. The Cytoplasmic portion of the chain corresponds to Ser-188–Gly-218. A helical membrane pass occupies residues Leu-219 to Arg-241. At Asp-242 to Asp-253 the chain is on the extracellular side. Transmembrane regions (helical) follow at residues Pro-254–Glu-278 and Trp-279–Gly-301. Residues Thr-302–Gly-336 lie on the Extracellular side of the membrane. A discontinuously helical membrane pass occupies residues Ser-337–Ile-358. Residues Gly-351, Ile-352, and Leu-353 each coordinate chloride. Topologically, residues Ser-359 to Ile-369 are cytoplasmic. Residues Pro-370 to Ile-391 form a helical membrane-spanning segment. At Gly-392–Phe-451 the chain is on the extracellular side. A glycan (N-linked (GlcNAc...) asparagine) is linked at Asn-404. An intrachain disulfide couples Cys-414 to Cys-419. The N-linked (GlcNAc...) asparagine glycan is linked to Asn-424. The cysteines at positions 428 and 434 are disulfide-linked. The helical transmembrane segment at Ala-452 to Ala-475 threads the bilayer. Ala-462, Ser-465, and Ser-466 together coordinate Na(+). Residues Lys-476–Arg-505 are Cytoplasmic-facing. The chain crosses the membrane as a helical span at residues Gly-506–Ile-520. Residues Ala-521–Thr-525 lie on the Extracellular side of the membrane. A helical membrane pass occupies residues Ile-526–Asn-542. A chloride-binding site is contributed by Tyr-538. Over Phe-543–Lys-565 the chain is Cytoplasmic. Transmembrane regions (helical) follow at residues Trp-566–Trp-585 and Ala-586–Leu-597. Over Leu-598 to Gln-1002 the chain is Cytoplasmic. Residues Ser-613–Gly-628 form a scissor helix region. Residues Leu-646, Arg-653, Val-675, Gly-739, Leu-778, and Asn-779 each coordinate ATP.

This sequence belongs to the SLC12A transporter family. Homodimer; adopts a domain-swap conformation at the scissor helices connecting the transmembrane domain and C-terminal domain. Interacts with KLHL3. Interacts with IL18R1; this interaction is increased by IL18 treatment. Ubiquitinated; ubiquitination is essential for regulation of endocytosis. In terms of processing, phosphorylated at Thr-53, Thr-58 and Ser-71 by OXSR1/OSR1 and STK39/SPAK downstream of WNK4, promoting its activity. Phosphorylated in response to IL18. As to expression, expressed predominantly in kidney, including in distal tubules (at protein level). Detected at low levels in heart, lung and liver. Not detected in normal aorta, but abundantly expressed in fatty streaks and advanced atherosclerotic lesions. In atherosclerotic lesions, expressed in macrophages, smooth muscle cells and endothelial cells (at protein level).

The protein localises to the cell membrane. It localises to the apical cell membrane. The enzyme catalyses chloride(out) + Na(+)(out) = chloride(in) + Na(+)(in). Its activity is regulated as follows. Phosphorylation by OXSR1/OSR1 and STK39/SPAK in kidney distal convoluted tubules promotes its activity. Also activated by OXSR1/OSR1 and STK39/SPAK downstream of WNK3. Inhibited by thiazide-type diuretic metolazone. Thiazide drugs, such as polythiazide, specifically inhibit SLC12A3/NCC transporter activity by competing with chloride for binding. In terms of biological role, electroneutral sodium and chloride ion cotransporter, which acts as a key mediator of sodium and chloride reabsorption in kidney distal convoluted tubules. Also acts as a receptor for the pro-inflammatory cytokine IL18, thereby contributing to IL18-induced cytokine production, including IFNG, IL6, IL18 and CCL2. May act either independently of IL18R1, or in a complex with IL18R1. This chain is Solute carrier family 12 member 3, found in Mus musculus (Mouse).